The chain runs to 179 residues: Plasmid-derived single-stranded DNA-binding protein (179 aa).

The 105-residue stretch at 6 to 110 (INKVILVGRL…ILVKTTGTMQ (105 aa)) folds into the SSB domain. A DNA-binding region spans residues 55-61 (WHRVVLF). The tract at residues 117–179 (GAQTQPEEGQ…DYGFSDDIPF (63 aa)) is disordered. Positions 118 to 132 (AQTQPEEGQQFSGQP) are enriched in polar residues. Basic residues predominate over residues 145-155 (GGAKTKGRGRK). Over residues 167 to 179 (EGDDYGFSDDIPF) the composition is skewed to acidic residues.

As to quaternary structure, homotetramer.

Its function is as follows. May contribute to the conjugative processing of DNA. It has a functional relationship with Psi (plasmid-mediated sos inhibition) proteins. The polypeptide is Plasmid-derived single-stranded DNA-binding protein (ssbF) (Escherichia coli (strain K12)).